Reading from the N-terminus, the 418-residue chain is Phosphatidylcholine:ceramide cholinephosphotransferase 1 (418 aa).

An SAM domain is found at 12–75 (WSPKKVADWL…LDMIETLKME (64 aa)). Position 13 is a phosphoserine (Ser-13). The next 5 membrane-spanning stretches (helical) occupy residues 141 to 161 (FLAF…ISVV), 189 to 209 (FSIC…QWLL), 220 to 240 (FFCI…VTTL), 281 to 301 (MCGD…YLFI), and 309 to 329 (LWWY…CILL). His-290 is an active-site residue. Catalysis depends on residues His-333 and Asp-337. A helical membrane pass occupies residues 335-352 (TVDVVVAYYITTRLFWWY).

This sequence belongs to the sphingomyelin synthase family. As to expression, widely expressed. Highest expression in the cardiovascular system.

Its subcellular location is the golgi apparatus membrane. The catalysed reaction is an N-acylsphing-4-enine + a 1,2-diacyl-sn-glycero-3-phosphocholine = a sphingomyelin + a 1,2-diacyl-sn-glycerol. It carries out the reaction 1-(9Z-octadecenoyl)-2-acyl-sn-3-glycerol + a sphingomyelin = a 1-(9Z-octadecenoyl)-2-acyl-sn-glycero-3-phosphocholine + an N-acylsphing-4-enine. It catalyses the reaction N-hexadecanoylsphinganine + a 1,2-diacyl-sn-glycero-3-phosphocholine = N-hexadecanoyl-sphinganine-1-phosphocholine + a 1,2-diacyl-sn-glycerol. The enzyme catalyses N-hexadecanoyl-(4R)-hydroxysphinganine + a 1,2-diacyl-sn-glycero-3-phosphocholine = N-hexadecanoyl-(4R)-hydroxysphinganine-phosphocholine + a 1,2-diacyl-sn-glycerol. The catalysed reaction is an N-acylsphing-4-enine + a 1,2-diacyl-sn-glycero-3-phosphoethanolamine = an N-acylsphing-4-enine 1-phosphoethanolamine + a 1,2-diacyl-sn-glycerol. The protein operates within sphingolipid metabolism. In terms of biological role, major sphingomyelin synthase at the Golgi apparatus. Catalyzes the reversible transfer of phosphocholine moiety in sphingomyelin biosynthesis: in the forward reaction transfers phosphocholine head group of phosphatidylcholine (PC) on to ceramide (CER) to form ceramide phosphocholine (sphingomyelin, SM) and diacylglycerol (DAG) as by-product, and in the reverse reaction transfers phosphocholine from SM to DAG to form PC and CER. The direction of the reaction depends on the levels of CER and DAG in Golgi membranes. Converts the newly synthesized CER, that is transported from the endoplasmic reticulum to the trans-Golgi by the Cer transport protein (CERT), to SM. Can form a heteromeric complex with glucosylceramide synthase (GCS) increasing SMS activity and reducing glucosylceramide synthesis, a critical mechanism that controls the metabolic fate of CER in the Golgi. Does not use free phosphorylcholine or CDP-choline as donor. Can also transfer phosphoethanolamine head group of phosphatidylethanolamine (PE) on to CER to form ceramide phosphoethanolamine (CPE). Regulates receptor-mediated signal transduction via mitogenic DAG and proapoptotic CER, as well as via SM, a structural component of membrane rafts that serve as platforms for signal transduction and protein sorting. Plays a role in secretory transport via regulation of DAG pool at the Golgi apparatus and its downstream effects on PRKD1. The polypeptide is Phosphatidylcholine:ceramide cholinephosphotransferase 1 (SGMS1) (Sus scrofa (Pig)).